Consider the following 207-residue polypeptide: Large ribosomal subunit protein uL4 (207 aa).

The interval 49-78 (HAVKNRSAVSGGGRKPWRQKGTGRARQGSI) is disordered.

The protein belongs to the universal ribosomal protein uL4 family. Part of the 50S ribosomal subunit.

One of the primary rRNA binding proteins, this protein initially binds near the 5'-end of the 23S rRNA. It is important during the early stages of 50S assembly. It makes multiple contacts with different domains of the 23S rRNA in the assembled 50S subunit and ribosome. In terms of biological role, forms part of the polypeptide exit tunnel. The protein is Large ribosomal subunit protein uL4 of Streptococcus thermophilus (strain CNRZ 1066).